Here is a 298-residue protein sequence, read N- to C-terminus: Nucleotide-binding protein MAV_3359 (298 aa).

An ATP-binding site is contributed by Gly-18–Gly-25. Asp-69–Ser-72 lines the GTP pocket.

The protein belongs to the RapZ-like family.

Its function is as follows. Displays ATPase and GTPase activities. This chain is Nucleotide-binding protein MAV_3359, found in Mycobacterium avium (strain 104).